The following is an 899-amino-acid chain: Translation initiation factor IF-2 (899 aa).

Disordered regions lie at residues 116–135 (AKARAEQQAREAAEQKARLQ), 170–189 (RGGGTVKPAPKPAETLEQKK), and 262–306 (DREI…ANKH). A tr-type G domain is found at 399–568 (TRPPVVTIMG…LIQSELMELK (170 aa)). The tract at residues 408 to 415 (GHVDHGKT) is G1. Residue 408–415 (GHVDHGKT) coordinates GTP. The tract at residues 433 to 437 (GITQH) is G2. Residues 454 to 457 (DTPG) form a G3 region. Residues 454-458 (DTPGH) and 508-511 (NKMD) contribute to the GTP site. The interval 508-511 (NKMD) is G4. Residues 544-546 (SAH) form a G5 region.

Belongs to the TRAFAC class translation factor GTPase superfamily. Classic translation factor GTPase family. IF-2 subfamily.

The protein resides in the cytoplasm. Its function is as follows. One of the essential components for the initiation of protein synthesis. Protects formylmethionyl-tRNA from spontaneous hydrolysis and promotes its binding to the 30S ribosomal subunits. Also involved in the hydrolysis of GTP during the formation of the 70S ribosomal complex. In Acinetobacter baumannii (strain AB307-0294), this protein is Translation initiation factor IF-2.